The primary structure comprises 130 residues: MASVKLASLIVLFATLGMFLTKNVGAASCNGVCSPFEMPPCGTSACRCIPVGLVVGYCRNPSGVFLRTNDEHPNLCESDADCRKKGSGNFCGHYPNPDIEYGWCFASKSEAEDFFSKITPKDLLKSVSTA.

The first 26 residues, methionine 1–alanine 26, serve as a signal peptide directing secretion. Disulfide bonds link cysteine 29/cysteine 46, cysteine 33/cysteine 48, and cysteine 41/cysteine 58. 2 consecutive propeptides follow at residues valine 64–asparagine 69 and leucine 123–alanine 130.

In terms of processing, the C-terminal glycine may be removed from PA1b. As to expression, major component of both the cotyledons and embryonic axes of mature seeds.

PA1b binds to basic 7S globulin (BG) and stimulates its phosphorylation activity. Involved in the signal transduction system to regulate the growth and differentiation as a hormone peptide. Toxic to various insects through binding to a high affinity binding site in the insect gut. The protein is Albumin-1 A of Pisum sativum (Garden pea).